Reading from the N-terminus, the 130-residue chain is Small ribosomal subunit protein uS9 (130 aa).

The protein belongs to the universal ribosomal protein uS9 family.

The sequence is that of Small ribosomal subunit protein uS9 from Streptococcus pyogenes serotype M1.